A 338-amino-acid polypeptide reads, in one-letter code: UDP-3-O-acylglucosamine N-acyltransferase (338 aa).

H239 (proton acceptor) is an active-site residue.

Belongs to the transferase hexapeptide repeat family. LpxD subfamily. Homotrimer.

It catalyses the reaction a UDP-3-O-[(3R)-3-hydroxyacyl]-alpha-D-glucosamine + a (3R)-hydroxyacyl-[ACP] = a UDP-2-N,3-O-bis[(3R)-3-hydroxyacyl]-alpha-D-glucosamine + holo-[ACP] + H(+). Its pathway is bacterial outer membrane biogenesis; LPS lipid A biosynthesis. Functionally, catalyzes the N-acylation of UDP-3-O-acylglucosamine using 3-hydroxyacyl-ACP as the acyl donor. Is involved in the biosynthesis of lipid A, a phosphorylated glycolipid that anchors the lipopolysaccharide to the outer membrane of the cell. This Xylella fastidiosa (strain M23) protein is UDP-3-O-acylglucosamine N-acyltransferase.